The primary structure comprises 461 residues: PE-PGRS family protein PE_PGRS45 (461 aa).

One can recognise a PE domain in the interval 4 to 92 (VNVAPQLVST…GSTYAVAEAA (89 aa)). Disordered regions lie at residues 232 to 251 (GGAG…GGNG) and 426 to 461 (AGSL…GADG). Positions 434–446 (PGFGGPGGSGGAS) are enriched in gly residues.

This sequence belongs to the mycobacterial PE family. PGRS subfamily. In terms of assembly, interacts with human TIMM23, which is part of a complex that mediates the translocation of transit peptide-containing proteins across the mitochondrial inner membrane.

It is found in the cell membrane. The protein resides in the secreted. The protein localises to the cell wall. Its subcellular location is the host mitochondrion. The catalysed reaction is hexadecanal + NADP(+) + CoA = hexadecanoyl-CoA + NADPH + H(+). Oxidoreductase activity is inhibited by the first line anti-tubercular drug isoniazid (INH). In terms of biological role, may be an effector protein that contributes to pathogenesis by targeting host mitochondria, where it modulates host cellular processes. In THP1 macrophages, increases the ADP-to-ATP ratio and increases the cellular ROS levels. Also induces mitochondrial perturbations through membrane depolarization, release of mitochondrial superoxide, up-regulation of expression of host proapoptotic proteins (BAX and BIM) and release of cytochrome C into the cytosol. May bind calcium to increase intracellular calcium influx, which may further lead to mitochondrial perturbations. Mitochondrial perturbations and alteration of Ca(2+) influx are independent but simultaneous events. In vitro, shows NADPH-dependent fatty acyl coenzyme A oxidoreductase activity. Can oxidize palmitoyl-CoA, but not glutathione and thiourea. The protein is PE-PGRS family protein PE_PGRS45 of Mycobacterium tuberculosis (strain ATCC 25618 / H37Rv).